The following is a 445-amino-acid chain: Ribosomal protein uS12 methylthiotransferase RimO (445 aa).

The region spanning 10–120 (PKVGFVSLGC…VVNAVHEVVP (111 aa)) is the MTTase N-terminal domain. 6 residues coordinate [4Fe-4S] cluster: Cys19, Cys55, Cys84, Cys153, Cys157, and Cys160. The Radical SAM core domain maps to 139–378 (LTPRHYAYLK…AHQQEISSAR (240 aa)). The TRAM domain maps to 380–445 (QQRIGKEIEV…DEYDLWAETL (66 aa)).

Belongs to the methylthiotransferase family. RimO subfamily. It depends on [4Fe-4S] cluster as a cofactor.

It is found in the cytoplasm. The enzyme catalyses L-aspartate(89)-[ribosomal protein uS12]-hydrogen + (sulfur carrier)-SH + AH2 + 2 S-adenosyl-L-methionine = 3-methylsulfanyl-L-aspartate(89)-[ribosomal protein uS12]-hydrogen + (sulfur carrier)-H + 5'-deoxyadenosine + L-methionine + A + S-adenosyl-L-homocysteine + 2 H(+). In terms of biological role, catalyzes the methylthiolation of an aspartic acid residue of ribosomal protein uS12. This Pseudomonas fluorescens (strain ATCC BAA-477 / NRRL B-23932 / Pf-5) protein is Ribosomal protein uS12 methylthiotransferase RimO.